The chain runs to 403 residues: Glyceraldehyde-3-phosphate dehydrogenase A, chloroplastic (403 aa).

A chloroplast-targeting transit peptide spans 1 to 66 (MASSMLSATT…GGPRRAPTEA (66 aa)). NADP(+) is bound by residues 77–78 (RI), Asp-102, and Arg-147. D-glyceraldehyde 3-phosphate contacts are provided by residues 219–221 (SCT), Thr-250, Arg-265, 278–279 (TG), and Arg-301. Cys-220 acts as the Nucleophile in catalysis. Asn-383 is a binding site for NADP(+).

The protein belongs to the glyceraldehyde-3-phosphate dehydrogenase family. In terms of assembly, tetramer of either four A chains (GAPDH 2) or two A and two B chains (GAPDH 1).

The protein localises to the plastid. The protein resides in the chloroplast. It catalyses the reaction D-glyceraldehyde 3-phosphate + phosphate + NADP(+) = (2R)-3-phospho-glyceroyl phosphate + NADPH + H(+). Its pathway is carbohydrate biosynthesis; Calvin cycle. This is Glyceraldehyde-3-phosphate dehydrogenase A, chloroplastic (GAPA) from Zea mays (Maize).